A 409-amino-acid polypeptide reads, in one-letter code: Putative competence-damage inducible protein (409 aa).

Belongs to the CinA family.

The sequence is that of Putative competence-damage inducible protein from Clostridium botulinum (strain 657 / Type Ba4).